The chain runs to 329 residues: MLKPMYYEFFFIFPKEQELFESFLLDTTHLALEESSLESLKAFDDKETIEFISQSSWHYFATHDPLKENLKEKPPHLKNFVILRSQKDLNDSLIPALKAFCLSLQQNLQSGFDFFYLSRNLASKDWLEAYKQAILPVQCAKFYIHPSWHQKPSHVATDDSIMIDPALAFGSGHHESTSICLELLSNLDLKRKNALDVGCGSGILSIALKKQGVSALSACDTDSLAVEETLKNFSLNQITLLAQDKVIHGSTQKIEGRFDIIVANIVADVIKSLYSEFVRLCNHTLILSGILETHLNSVLQIYYNGFEVLEQRQRNEWVALKLLKKQSIN.

Positions 177, 198, 220, and 264 each coordinate S-adenosyl-L-methionine.

It belongs to the methyltransferase superfamily. PrmA family.

The protein resides in the cytoplasm. The catalysed reaction is L-lysyl-[protein] + 3 S-adenosyl-L-methionine = N(6),N(6),N(6)-trimethyl-L-lysyl-[protein] + 3 S-adenosyl-L-homocysteine + 3 H(+). Functionally, methylates ribosomal protein L11. This chain is Ribosomal protein L11 methyltransferase, found in Helicobacter pylori (strain Shi470).